A 438-amino-acid polypeptide reads, in one-letter code: UPF0229 protein NGR_c12350 (438 aa).

A compositionally biased stretch (basic and acidic residues) spans methionine 1–leucine 16. Disordered regions lie at residues methionine 1 to glutamine 20 and phenylalanine 83 to glutamine 107. Gly residues predominate over residues serine 94–threonine 105.

This sequence belongs to the UPF0229 family.

The sequence is that of UPF0229 protein NGR_c12350 from Sinorhizobium fredii (strain NBRC 101917 / NGR234).